A 211-amino-acid polypeptide reads, in one-letter code: MEFPNCTVVDHPLVKHKLTQMRRVETSTASFRALLQEISLLLAYEALRDLKVREEDIQTPMARTVAPVLDGKKLVLVAIMRAGQGILDGMLQLVPSARVGHIGLYRDPETLSPVEYYYRVPGQLADRDVVVCDPMLATGNSAVAALQRLKKSKPGSLRFVCLLACPEGLTNLREHHPDVHVYTAAIDERLDEHGYILPGLGDAGDRLFGTK.

5-phospho-alpha-D-ribose 1-diphosphate contacts are provided by residues Arg81, Arg106, and 133 to 141 (DPMLATGNS). Residues Ile196 and 201–203 (GDA) each bind uracil. Asp202 contributes to the 5-phospho-alpha-D-ribose 1-diphosphate binding site.

It belongs to the UPRTase family. Requires Mg(2+) as cofactor.

It catalyses the reaction UMP + diphosphate = 5-phospho-alpha-D-ribose 1-diphosphate + uracil. It participates in pyrimidine metabolism; UMP biosynthesis via salvage pathway; UMP from uracil: step 1/1. With respect to regulation, allosterically activated by GTP. Catalyzes the conversion of uracil and 5-phospho-alpha-D-ribose 1-diphosphate (PRPP) to UMP and diphosphate. This Myxococcus xanthus (strain DK1622) protein is Uracil phosphoribosyltransferase.